The sequence spans 481 residues: UDP-N-acetylmuramate--L-alanine ligase (481 aa).

ATP is bound at residue 123 to 129; the sequence is GTHGKTT.

It belongs to the MurCDEF family.

It is found in the cytoplasm. It carries out the reaction UDP-N-acetyl-alpha-D-muramate + L-alanine + ATP = UDP-N-acetyl-alpha-D-muramoyl-L-alanine + ADP + phosphate + H(+). Its pathway is cell wall biogenesis; peptidoglycan biosynthesis. Functionally, cell wall formation. The polypeptide is UDP-N-acetylmuramate--L-alanine ligase (Pseudomonas fluorescens (strain SBW25)).